The following is a 177-amino-acid chain: ATP synthase subunit delta (177 aa).

Belongs to the ATPase delta chain family. F-type ATPases have 2 components, F(1) - the catalytic core - and F(0) - the membrane proton channel. F(1) has five subunits: alpha(3), beta(3), gamma(1), delta(1), epsilon(1). F(0) has three main subunits: a(1), b(2) and c(10-14). The alpha and beta chains form an alternating ring which encloses part of the gamma chain. F(1) is attached to F(0) by a central stalk formed by the gamma and epsilon chains, while a peripheral stalk is formed by the delta and b chains.

The protein resides in the cell inner membrane. F(1)F(0) ATP synthase produces ATP from ADP in the presence of a proton or sodium gradient. F-type ATPases consist of two structural domains, F(1) containing the extramembraneous catalytic core and F(0) containing the membrane proton channel, linked together by a central stalk and a peripheral stalk. During catalysis, ATP synthesis in the catalytic domain of F(1) is coupled via a rotary mechanism of the central stalk subunits to proton translocation. In terms of biological role, this protein is part of the stalk that links CF(0) to CF(1). It either transmits conformational changes from CF(0) to CF(1) or is implicated in proton conduction. The protein is ATP synthase subunit delta of Serratia proteamaculans (strain 568).